The chain runs to 1066 residues: Probable sucrose-phosphate synthase 4 (1066 aa).

Disordered regions lie at residues 132 to 166 (YAAA…GRMP) and 688 to 714 (PRHP…SLRD). A compositionally biased stretch (basic and acidic residues) spans 143 to 162 (EGEKGENINESSSTHDESTR).

It belongs to the glycosyltransferase 1 family. In terms of assembly, homodimer or homotetramer. In terms of tissue distribution, expressed in germinating seeds.

The catalysed reaction is beta-D-fructose 6-phosphate + UDP-alpha-D-glucose = sucrose 6(F)-phosphate + UDP + H(+). It participates in glycan biosynthesis; sucrose biosynthesis; sucrose from D-fructose 6-phosphate and UDP-alpha-D-glucose: step 1/2. With respect to regulation, activity is regulated by phosphorylation and moderated by concentration of metabolites and light. Plays a role in photosynthetic sucrose synthesis by catalyzing the rate-limiting step of sucrose biosynthesis from UDP-glucose and fructose- 6-phosphate. Involved in the regulation of carbon partitioning in the leaves of plants. May regulate the synthesis of sucrose and therefore play a major role as a limiting factor in the export of photoassimilates out of the leaf. Plays a role for sucrose availability that is essential for plant growth and fiber elongation. The protein is Probable sucrose-phosphate synthase 4 (SPS4) of Oryza sativa subsp. japonica (Rice).